We begin with the raw amino-acid sequence, 224 residues long: PKHD-type hydroxylase Shewmr4_3244 (224 aa).

Positions 78–176 (QFYPPLFNRY…RTAAFMWLQS (99 aa)) constitute a Fe2OG dioxygenase domain. Fe cation is bound by residues histidine 96, aspartate 98, and histidine 157. Position 167 (arginine 167) interacts with 2-oxoglutarate.

It depends on Fe(2+) as a cofactor. L-ascorbate is required as a cofactor.

This is PKHD-type hydroxylase Shewmr4_3244 from Shewanella sp. (strain MR-4).